The following is a 198-amino-acid chain: 5'-deoxynucleotidase hdd1 (198 aa).

The region spanning 38–144 (IADHMYRMGI…VKDIDKFEMI (107 aa)) is the HD domain. Residues H41, H69, D70, E73, D78, I79, and D139 each coordinate a divalent metal cation.

Belongs to the HDDC2 family. In terms of assembly, homodimer. The cofactor is Mn(2+). It depends on Co(2+) as a cofactor. Requires Mg(2+) as cofactor.

It localises to the cytoplasm. Its subcellular location is the nucleus. It catalyses the reaction a 2'-deoxyribonucleoside 5'-phosphate + H2O = a 2'-deoxyribonucleoside + phosphate. Catalyzes the dephosphorylation of the nucleoside 5'-monophosphates deoxyadenosine monophosphate (dAMP), deoxycytidine monophosphate (dCMP), deoxyguanosine monophosphate (dGMP) and deoxythymidine monophosphate (dTMP). This is 5'-deoxynucleotidase hdd1 from Schizosaccharomyces pombe (strain 972 / ATCC 24843) (Fission yeast).